The primary structure comprises 329 residues: 36 kDa antigen (329 aa).

The helical transmembrane segment at 11-31 (AILTGGGALLLGLIVLFYLAY) threads the bilayer.

This sequence belongs to the membrane fusion protein (MFP) (TC 8.A.1) family.

Its subcellular location is the membrane. The polypeptide is 36 kDa antigen (Helicobacter pylori (strain ATCC 700392 / 26695) (Campylobacter pylori)).